A 269-amino-acid chain; its full sequence is Formamidopyrimidine-DNA glycosylase (269 aa).

Proline 2 acts as the Schiff-base intermediate with DNA in catalysis. The Proton donor role is filled by glutamate 3. Residue lysine 57 is the Proton donor; for beta-elimination activity of the active site. Residues histidine 90, arginine 109, and lysine 150 each coordinate DNA. Residues 235-269 (QVYGKAGESCPECGEAIQELKIGQRNTFYCSYCQC) form an FPG-type zinc finger. Residue arginine 259 is the Proton donor; for delta-elimination activity of the active site.

It belongs to the FPG family. In terms of assembly, monomer. Zn(2+) serves as cofactor.

It catalyses the reaction Hydrolysis of DNA containing ring-opened 7-methylguanine residues, releasing 2,6-diamino-4-hydroxy-5-(N-methyl)formamidopyrimidine.. The enzyme catalyses 2'-deoxyribonucleotide-(2'-deoxyribose 5'-phosphate)-2'-deoxyribonucleotide-DNA = a 3'-end 2'-deoxyribonucleotide-(2,3-dehydro-2,3-deoxyribose 5'-phosphate)-DNA + a 5'-end 5'-phospho-2'-deoxyribonucleoside-DNA + H(+). Involved in base excision repair of DNA damaged by oxidation or by mutagenic agents. Acts as a DNA glycosylase that recognizes and removes damaged bases. Has a preference for oxidized purines, such as 7,8-dihydro-8-oxoguanine (8-oxoG). Has AP (apurinic/apyrimidinic) lyase activity and introduces nicks in the DNA strand. Cleaves the DNA backbone by beta-delta elimination to generate a single-strand break at the site of the removed base with both 3'- and 5'-phosphates. In Vibrio vulnificus (strain YJ016), this protein is Formamidopyrimidine-DNA glycosylase.